The chain runs to 533 residues: Undecaprenyl phosphate-alpha-4-amino-4-deoxy-L-arabinose arabinosyl transferase (533 aa).

13 helical membrane-spanning segments follow: residues 10 to 30 (LLLA…GLWI), 64 to 84 (PAGY…LFGV), 86 to 106 (IASA…AGKI), 113 to 133 (SFAS…AGYS), 137 to 157 (PQFT…VHSI), 170 to 190 (VACG…PAII), 207 to 227 (FGPL…LAVH), 257 to 277 (WWFY…LLPV), 290 to 310 (DTAF…LSKG), 312 to 332 (LPTY…DALV), 345 to 365 (VNGI…IYVQ), 377 to 397 (HLLL…LQGI), and 402 to 422 (FWAL…AALP).

This sequence belongs to the glycosyltransferase 83 family.

It localises to the cell inner membrane. It carries out the reaction 4-amino-4-deoxy-alpha-L-arabinopyranosyl di-trans,octa-cis-undecaprenyl phosphate + lipid IVA = lipid IIA + di-trans,octa-cis-undecaprenyl phosphate.. It functions in the pathway lipopolysaccharide metabolism; 4-amino-4-deoxy-beta-L-arabinose-lipid A biosynthesis. In terms of biological role, catalyzes the transfer of the L-Ara4N moiety of the glycolipid undecaprenyl phosphate-alpha-L-Ara4N to lipid A. The modified arabinose is attached to lipid A and is required for resistance to polymyxin and cationic antimicrobial peptides. This chain is Undecaprenyl phosphate-alpha-4-amino-4-deoxy-L-arabinose arabinosyl transferase, found in Pseudomonas savastanoi pv. phaseolicola (strain 1448A / Race 6) (Pseudomonas syringae pv. phaseolicola (strain 1448A / Race 6)).